The primary structure comprises 1250 residues: Myosin-1 (1250 aa).

Residues 1-43 are disordered; it reads MGHSRRPAGGEKKSRGFGRSKAAADVGDGRQTGGKPQVKKATF. A Myosin motor domain is found at 51-730; it reads IGVSDLTLLS…TLFALEAMRD (680 aa). Residue 144–151 participates in ATP binding; that stretch reads GESGAGKT. S372 is subject to Phosphoserine. The segment at 419–501 is actin-binding; it reads SIGILDIYGF…PGVFAALNDA (83 aa). 2 IQ domains span residues 734–754 and 755–780; these read HNMA…RTEC and AIRI…QGHQ. Positions 788 to 978 constitute a TH1 domain; that stretch reads RRRMSLLGSR…TIHTGPGEPA (191 aa). Disordered regions lie at residues 962 to 1079 and 1126 to 1250; these read DDSY…PKKP and WTPE…DDDW. A compositionally biased stretch (pro residues) spans 1021–1035; the sequence is AAQPLPRATPQPAAP. Residues 1036 to 1051 show a composition bias toward low complexity; the sequence is QPAARAVPQPVAAVAA. 2 stretches are compositionally biased toward pro residues: residues 1064 to 1077 and 1139 to 1151; these read APPP…PAPK and TPKP…PPAA. The SH3 domain maps to 1076–1137; it reads PKKPTAKVLY…PEAYLEEQVA (62 aa). Residues 1152 to 1170 show a composition bias toward low complexity; it reads PRSTPAPATNGAAAAAKAK. A compositionally biased stretch (polar residues) spans 1201 to 1222; the sequence is VSMNSHDSSGGSGRGTPNSMSN. Positions 1223 to 1232 are enriched in low complexity; sequence ASLAGGLAEA.

The protein belongs to the TRAFAC class myosin-kinesin ATPase superfamily. Myosin family. Phosphorylation of the TEDS site (Ser-372) is required for the polarization of the actin cytoskeleton. Phosphorylation probably activates the myosin-I ATPase activity.

It is found in the cytoplasm. It localises to the cytoskeleton. The protein resides in the actin patch. Functionally, type-I myosin implicated in the organization of the actin cytoskeleton. Required for proper actin cytoskeleton polarization. At the cell cortex, assembles in patch-like structures together with proteins from the actin-polymerizing machinery and promotes actin assembly. Functions as actin nucleation-promoting factor (NPF) for the Arp2/3 complex. Plays an important role in polarized growth, spore germination, hyphal morphogenesis, and septal wall formation. This Neosartorya fischeri (strain ATCC 1020 / DSM 3700 / CBS 544.65 / FGSC A1164 / JCM 1740 / NRRL 181 / WB 181) (Aspergillus fischerianus) protein is Myosin-1 (myoA).